Reading from the N-terminus, the 233-residue chain is 3-dehydroquinate dehydratase (233 aa).

3-dehydroquinate is bound by residues 34-36 and arginine 64; that span reads ELR. Histidine 118 serves as the catalytic Proton donor/acceptor. The active-site Schiff-base intermediate with substrate is the lysine 145. Residues arginine 185, serine 205, and glutamine 209 each coordinate 3-dehydroquinate.

The protein belongs to the type-I 3-dehydroquinase family. In terms of assembly, homodimer.

It catalyses the reaction 3-dehydroquinate = 3-dehydroshikimate + H2O. It participates in metabolic intermediate biosynthesis; chorismate biosynthesis; chorismate from D-erythrose 4-phosphate and phosphoenolpyruvate: step 3/7. In terms of biological role, involved in the third step of the chorismate pathway, which leads to the biosynthesis of aromatic amino acids. Catalyzes the cis-dehydration of 3-dehydroquinate (DHQ) and introduces the first double bond of the aromatic ring to yield 3-dehydroshikimate. This is 3-dehydroquinate dehydratase from Coxiella burnetii (strain CbuG_Q212) (Coxiella burnetii (strain Q212)).